Consider the following 449-residue polypeptide: Naphthalene 1,2-dioxygenase system, large oxygenase component (449 aa).

The Rieske domain maps to 39-137; that stretch reads WLFLTHDSLI…LNKKCLGLKE (99 aa). [2Fe-2S] cluster is bound by residues Cys-81, His-83, Cys-101, and His-104. Residues His-208, His-213, and Asp-362 each contribute to the Fe cation site.

This sequence belongs to the bacterial ring-hydroxylating dioxygenase alpha subunit family. The naphthalene dioxygenase (NDO) multicomponent enzyme system is composed of an electron transfer component and a dioxygenase component (iron sulfur protein (ISP)). The electron transfer component is composed of a ferredoxin reductase (NdoR) and a ferredoxin (NdoA), and the dioxygenase component is formed of a heterohexamer (trimer of heterodimers) of three large alpha subunits (NdoB) and three small beta subunits (NdoC). The cofactor is [2Fe-2S] cluster. Requires Fe(2+) as cofactor.

The catalysed reaction is naphthalene + NADH + O2 + H(+) = (1R,2S)-1,2-dihydronaphthalene-1,2-diol + NAD(+). The protein operates within aromatic compound metabolism; naphthalene degradation. In terms of biological role, component of the naphthalene dioxygenase (NDO) multicomponent enzyme system which catalyzes the incorporation of both atoms of molecular oxygen into naphthalene to form cis-(1R,2S)-dihydroxy-1,2-dihydronaphthalene. The alpha subunit has a catalytic role in the holoenzyme. Also able to catalyze the cis-dihydroxylation of biphenyl and phenanthrene. This Pseudomonas putida (Arthrobacter siderocapsulatus) protein is Naphthalene 1,2-dioxygenase system, large oxygenase component.